A 422-amino-acid polypeptide reads, in one-letter code: Serine hydroxymethyltransferase (422 aa).

(6S)-5,6,7,8-tetrahydrofolate is bound by residues Leu-121 and 125–127 (GHL). Lys-230 is modified (N6-(pyridoxal phosphate)lysine). Residue 355 to 357 (SPF) coordinates (6S)-5,6,7,8-tetrahydrofolate.

Belongs to the SHMT family. Homodimer. The cofactor is pyridoxal 5'-phosphate.

It is found in the cytoplasm. The enzyme catalyses (6R)-5,10-methylene-5,6,7,8-tetrahydrofolate + glycine + H2O = (6S)-5,6,7,8-tetrahydrofolate + L-serine. The protein operates within one-carbon metabolism; tetrahydrofolate interconversion. It participates in amino-acid biosynthesis; glycine biosynthesis; glycine from L-serine: step 1/1. Functionally, catalyzes the reversible interconversion of serine and glycine with tetrahydrofolate (THF) serving as the one-carbon carrier. This reaction serves as the major source of one-carbon groups required for the biosynthesis of purines, thymidylate, methionine, and other important biomolecules. Also exhibits THF-independent aldolase activity toward beta-hydroxyamino acids, producing glycine and aldehydes, via a retro-aldol mechanism. This is Serine hydroxymethyltransferase from Teredinibacter turnerae (strain ATCC 39867 / T7901).